We begin with the raw amino-acid sequence, 287 residues long: Phosphatidylserine decarboxylase proenzyme (287 aa).

Catalysis depends on charge relay system; for autoendoproteolytic cleavage activity residues D89, H146, and S252. S252 (schiff-base intermediate with substrate; via pyruvic acid; for decarboxylase activity) is an active-site residue. S252 carries the post-translational modification Pyruvic acid (Ser); by autocatalysis.

It belongs to the phosphatidylserine decarboxylase family. PSD-B subfamily. Prokaryotic type I sub-subfamily. Heterodimer of a large membrane-associated beta subunit and a small pyruvoyl-containing alpha subunit. Requires pyruvate as cofactor. Post-translationally, is synthesized initially as an inactive proenzyme. Formation of the active enzyme involves a self-maturation process in which the active site pyruvoyl group is generated from an internal serine residue via an autocatalytic post-translational modification. Two non-identical subunits are generated from the proenzyme in this reaction, and the pyruvate is formed at the N-terminus of the alpha chain, which is derived from the carboxyl end of the proenzyme. The autoendoproteolytic cleavage occurs by a canonical serine protease mechanism, in which the side chain hydroxyl group of the serine supplies its oxygen atom to form the C-terminus of the beta chain, while the remainder of the serine residue undergoes an oxidative deamination to produce ammonia and the pyruvoyl prosthetic group on the alpha chain. During this reaction, the Ser that is part of the protease active site of the proenzyme becomes the pyruvoyl prosthetic group, which constitutes an essential element of the active site of the mature decarboxylase.

It is found in the cell membrane. The enzyme catalyses a 1,2-diacyl-sn-glycero-3-phospho-L-serine + H(+) = a 1,2-diacyl-sn-glycero-3-phosphoethanolamine + CO2. It participates in phospholipid metabolism; phosphatidylethanolamine biosynthesis; phosphatidylethanolamine from CDP-diacylglycerol: step 2/2. Functionally, catalyzes the formation of phosphatidylethanolamine (PtdEtn) from phosphatidylserine (PtdSer). The sequence is that of Phosphatidylserine decarboxylase proenzyme from Shewanella halifaxensis (strain HAW-EB4).